Reading from the N-terminus, the 306-residue chain is Glutathione transport system permease protein GsiC (306 aa).

Residues 1–8 (MLNYVLKR) lie on the Cytoplasmic side of the membrane. Residues 9-29 (LLGLIPTLLIVAVLVFLFVHL) form a helical membrane-spanning segment. The Periplasmic segment spans residues 30 to 102 (LPGDPARLIA…SRFLPTLWLT (73 aa)). The ABC transmembrane type-1 domain occupies 95 to 292 (FLPTLWLTIT…LEFILINLVV (198 aa)). The chain crosses the membrane as a helical span at residues 103-123 (ITSMIWAVLFGMAIGIAAAVW). Topologically, residues 124–134 (RNRWPDRVGMT) are cytoplasmic. A helical transmembrane segment spans residues 135-155 (LAVTGISFPAFALGMLLMQIF). Residues 156–168 (SVDLGWLPTVGAD) are Periplasmic-facing. A helical transmembrane segment spans residues 169-189 (SWQHYILPSLTLGAAVASVMA). Residues 190–228 (RFTRSSFVDVLSEDYMRTARAKGVSETWVVLKHGLRNAM) are Cytoplasmic-facing. Residues 229 to 249 (IPVVTMMGLQFGFLLGGSIVV) form a helical membrane-spanning segment. Residues 250 to 278 (EKVFNWPGLGRLLVDSVDMRDYPVIQAEV) lie on the Periplasmic side of the membrane. The chain crosses the membrane as a helical span at residues 279-299 (LLFSLEFILINLVVDVLYAAI). Residues 300–306 (NPAIRYK) lie on the Cytoplasmic side of the membrane.

Belongs to the binding-protein-dependent transport system permease family. The complex is composed of two ATP-binding proteins (GsiA), two transmembrane proteins (GsiC and GsiD) and a solute-binding protein (GsiB).

It localises to the cell inner membrane. Its function is as follows. Part of the ABC transporter complex GsiABCD involved in glutathione import. Probably responsible for the translocation of the substrate across the membrane. The polypeptide is Glutathione transport system permease protein GsiC (Salmonella choleraesuis (strain SC-B67)).